The sequence spans 344 residues: Glucan endo-1,3-beta-glucosidase (344 aa).

An N-terminal signal peptide occupies residues 1 to 27; the sequence is MALTRNRPFVVVLLLGFVIMSTITIGA. E123 serves as the catalytic Proton donor. E268 (nucleophile) is an active-site residue.

It belongs to the glycosyl hydrolase 17 family.

The enzyme catalyses Hydrolysis of (1-&gt;3)-beta-D-glucosidic linkages in (1-&gt;3)-beta-D-glucans.. Implicated in the defense of plants against pathogens. The polypeptide is Glucan endo-1,3-beta-glucosidase (Vitis vinifera (Grape)).